A 379-amino-acid chain; its full sequence is Small ribosomal subunit protein uS2cy (379 aa).

An N-terminal extension region spans residues 1–94; it reads MKLVQFFEIG…MGTSSNRAKS (94 aa). The interval 83–106 is disordered; the sequence is NQMGTSSNRAKSTDTPAVSTSQNV.

Belongs to the universal ribosomal protein uS2 family.

The protein resides in the plastid. It is found in the chloroplast. The protein is Small ribosomal subunit protein uS2cy (rps2-2) of Tetradesmus obliquus (Green alga).